The primary structure comprises 490 residues: Argininosuccinate lyase (490 aa).

Belongs to the lyase 1 family. Argininosuccinate lyase subfamily.

It is found in the cytoplasm. The enzyme catalyses 2-(N(omega)-L-arginino)succinate = fumarate + L-arginine. It functions in the pathway amino-acid biosynthesis; L-arginine biosynthesis; L-arginine from L-ornithine and carbamoyl phosphate: step 3/3. This chain is Argininosuccinate lyase, found in Bifidobacterium longum subsp. infantis (strain ATCC 15697 / DSM 20088 / JCM 1222 / NCTC 11817 / S12).